The sequence spans 820 residues: Mitogen-activated protein kinase kinase kinase kinase 2 (820 aa).

In terms of domain architecture, Protein kinase spans 16–273 (FELLQRVGAG…AEKLLQHPFT (258 aa)). ATP contacts are provided by residues 22 to 30 (VGAGTYGDV) and lysine 45. The active-site Proton acceptor is aspartate 136. The segment at 294–314 (LGTPSPEDCELETYDMFPDTI) is PEST1. Phosphoserine is present on serine 328. Residues 344-360 (ETDPLNEPWEEEWTLLG) are PEST2. The tract at residues 387–442 (SEFQELDSPDDTMGTIKRAPFLGPLPTDPPAEEPLSSPPGTLPPPPSGPNSSPLLP) is disordered. Serine 394 carries the phosphoserine modification. The interval 405–448 (APFLGPLPTDPPAEEPLSSPPGTLPPPPSGPNSSPLLPTAWATM) is PEST3. Residues 422–434 (SSPPGTLPPPPSG) are compositionally biased toward pro residues. Residues 482 to 793 (PLRIHAAVTW…IFRVLGAHRD (312 aa)) enclose the CNH domain.

Belongs to the protein kinase superfamily. STE Ser/Thr protein kinase family. STE20 subfamily. As to quaternary structure, interacts with TRAF2, TRAF6, MAP3K1/MEKK1 and MAP3K11/MLK3. Interacts with RAB8A. It depends on Mg(2+) as a cofactor. In terms of processing, polyubiquitinated through 'Lys-48'-polyubiquitin chains, allowing proteasomal turnover. Ubiquitination requires the kinase activity of MAP4K2/GCK. Autophosphorylated in response to tumor necrosis factor (TNF), endotoxins or pro-inflammatory stimuli. Autophosphorylation leads to activation. As to expression, highly expressed in germinal center but not mantle zone B-cells. Also expressed in lung, brain and placenta and at lower levels in other tissues examined.

It localises to the cytoplasm. Its subcellular location is the basolateral cell membrane. The protein resides in the golgi apparatus membrane. It catalyses the reaction L-seryl-[protein] + ATP = O-phospho-L-seryl-[protein] + ADP + H(+). The catalysed reaction is L-threonyl-[protein] + ATP = O-phospho-L-threonyl-[protein] + ADP + H(+). The tumor necrosis factor (TNF), as well as endotoxins and pro-inflammatory stimuli such as polyinosine-polycytidine (poly(IC)), lipopolysaccharides (LPS), peptidoglycan (PGN), flagellin, or lipid A activate MAP4K2 by promoting its autophosphorylation. Its function is as follows. Serine/threonine-protein kinase which acts as an essential component of the MAP kinase signal transduction pathway. Acts as a MAPK kinase kinase kinase (MAP4K) and is an upstream activator of the stress-activated protein kinase/c-Jun N-terminal kinase (SAP/JNK) signaling pathway and to a lesser extent of the p38 MAPKs signaling pathway. Required for the efficient activation of JNKs by TRAF6-dependent stimuli, including pathogen-associated molecular patterns (PAMPs) such as polyinosine-polycytidine (poly(IC)), lipopolysaccharides (LPS), lipid A, peptidoglycan (PGN), or bacterial flagellin. To a lesser degree, IL-1 and engagement of CD40 also stimulate MAP4K2-mediated JNKs activation. The requirement for MAP4K2/GCK is most pronounced for LPS signaling, and extends to LPS stimulation of c-Jun phosphorylation and induction of IL-8. Enhances MAP3K1 oligomerization, which may relieve N-terminal mediated MAP3K1 autoinhibition and lead to activation following autophosphorylation. Also mediates the SAP/JNK signaling pathway and the p38 MAPKs signaling pathway through activation of the MAP3Ks MAP3K10/MLK2 and MAP3K11/MLK3. May play a role in the regulation of vesicle targeting or fusion. regulation of vesicle targeting or fusion. Activator of the Hippo signaling pathway which plays a pivotal role in organ size control and tumor suppression by restricting proliferation and promoting apoptosis. MAP4Ks act in parallel to and are partially redundant with STK3/MST2 and STK4/MST2 in the phosphorylation and activation of LATS1/2, and establish MAP4Ks as components of the expanded Hippo pathway. This Homo sapiens (Human) protein is Mitogen-activated protein kinase kinase kinase kinase 2.